The primary structure comprises 107 residues: Cytochrome c2 (107 aa).

Residues Cys14, Cys17, His18, and Met80 each coordinate heme c.

It belongs to the cytochrome c family. Binds 1 heme c group covalently per subunit.

Cytochrome c2 is found mainly in purple, non-sulfur, photosynthetic bacteria where it functions as the electron donor to the oxidized bacteriochlorophyll in the photophosphorylation pathway. However, it may also have a role in the respiratory chain and is found in some non-photosynthetic bacteria. The protein is Cytochrome c2 of Rhodoblastus acidophilus (Rhodopseudomonas acidophila).